The primary structure comprises 412 residues: Serine hydroxymethyltransferase (412 aa).

(6S)-5,6,7,8-tetrahydrofolate contacts are provided by residues L117 and 121 to 123; that span reads GHL. Residue K226 is modified to N6-(pyridoxal phosphate)lysine.

The protein belongs to the SHMT family. In terms of assembly, homodimer. Pyridoxal 5'-phosphate serves as cofactor.

Its subcellular location is the cytoplasm. It carries out the reaction (6R)-5,10-methylene-5,6,7,8-tetrahydrofolate + glycine + H2O = (6S)-5,6,7,8-tetrahydrofolate + L-serine. It functions in the pathway one-carbon metabolism; tetrahydrofolate interconversion. Its pathway is amino-acid biosynthesis; glycine biosynthesis; glycine from L-serine: step 1/1. Its function is as follows. Catalyzes the reversible interconversion of serine and glycine with tetrahydrofolate (THF) serving as the one-carbon carrier. This reaction serves as the major source of one-carbon groups required for the biosynthesis of purines, thymidylate, methionine, and other important biomolecules. Also exhibits THF-independent aldolase activity toward beta-hydroxyamino acids, producing glycine and aldehydes, via a retro-aldol mechanism. The polypeptide is Serine hydroxymethyltransferase (Staphylococcus haemolyticus (strain JCSC1435)).